The following is a 157-amino-acid chain: Crossover junction endodeoxyribonuclease RuvC (157 aa).

Residues aspartate 7, glutamate 66, and aspartate 139 contribute to the active site. Positions 7, 66, and 139 each coordinate Mg(2+).

Belongs to the RuvC family. In terms of assembly, homodimer which binds Holliday junction (HJ) DNA. The HJ becomes 2-fold symmetrical on binding to RuvC with unstacked arms; it has a different conformation from HJ DNA in complex with RuvA. In the full resolvosome a probable DNA-RuvA(4)-RuvB(12)-RuvC(2) complex forms which resolves the HJ. Requires Mg(2+) as cofactor.

The protein localises to the cytoplasm. The enzyme catalyses Endonucleolytic cleavage at a junction such as a reciprocal single-stranded crossover between two homologous DNA duplexes (Holliday junction).. The RuvA-RuvB-RuvC complex processes Holliday junction (HJ) DNA during genetic recombination and DNA repair. Endonuclease that resolves HJ intermediates. Cleaves cruciform DNA by making single-stranded nicks across the HJ at symmetrical positions within the homologous arms, yielding a 5'-phosphate and a 3'-hydroxyl group; requires a central core of homology in the junction. The consensus cleavage sequence is 5'-(A/T)TT(C/G)-3'. Cleavage occurs on the 3'-side of the TT dinucleotide at the point of strand exchange. HJ branch migration catalyzed by RuvA-RuvB allows RuvC to scan DNA until it finds its consensus sequence, where it cleaves and resolves the cruciform DNA. This chain is Crossover junction endodeoxyribonuclease RuvC, found in Helicobacter acinonychis (strain Sheeba).